The chain runs to 176 residues: Glyoxalase domain-containing protein RDO1 (176 aa).

One can recognise a VOC domain in the interval 53–172 (SLDHLVITCH…DNNLIELSSY (120 aa)). Residue glutamate 168 is the Proton donor/acceptor of the active site.

The protein belongs to the glyoxalase I family.

It participates in secondary metabolite biosynthesis. Glyoxalase domain-containing protein; part of the gene cluster that mediates the biosynthesis of itaconic acid and 2-hydroxyparaconate. Cis-aconitate is secreted by the mitochondrial tricarboxylate transporter MTT1. In the cytosol cis-aconitate is converted into trans-aconitate via isomerization by the aconitate-delta-isomerase ADI1. Decarboxylation of trans-aconitate by the trans-aconitate decarboxylase TAD1 then leads then to the production of itaconic acid. The cytochrome P450 monooxygenase CYP3 further converts itaconate to 2-hydroxyparaconate via oxidation of the double bond, leading to a transient epoxide, which can subsequently be lactonized to produce 2-hydroxyparaconate. Secretion of itaconate and possibly 2-hydroxyparaconate into the medium is mediated by the major facilitator ITP1. The glyoxalase domain-containing protein RDO1 is not involved in the biosynthesis of itaconate and 2-hydroxyparaconate, however, it might play a role in the further conversion of 2-hydroxyparaconate to itatartarate. In Mycosarcoma maydis (Corn smut fungus), this protein is Glyoxalase domain-containing protein RDO1.